The chain runs to 82 residues: U16-lycotoxin-Ls1a (82 aa).

An N-terminal signal peptide occupies residues 1 to 22 (MSPKVQALLLLVGLITFLAVHA). The propeptide occupies 23 to 34 (EEELSETVESER). 4 disulfide bridges follow: cysteine 36–cysteine 51, cysteine 43–cysteine 56, cysteine 50–cysteine 67, and cysteine 58–cysteine 65.

The protein belongs to the neurotoxin 02 (plectoxin) family. 04 (U16-lycotoxin) subfamily. In terms of tissue distribution, expressed by the venom gland.

The protein resides in the secreted. This Lycosa singoriensis (Wolf spider) protein is U16-lycotoxin-Ls1a.